The following is a 131-amino-acid chain: Ribosome-binding factor A (131 aa).

Belongs to the RbfA family. In terms of assembly, monomer. Binds 30S ribosomal subunits, but not 50S ribosomal subunits or 70S ribosomes.

Its subcellular location is the cytoplasm. Its function is as follows. One of several proteins that assist in the late maturation steps of the functional core of the 30S ribosomal subunit. Associates with free 30S ribosomal subunits (but not with 30S subunits that are part of 70S ribosomes or polysomes). Required for efficient processing of 16S rRNA. May interact with the 5'-terminal helix region of 16S rRNA. This Mannheimia succiniciproducens (strain KCTC 0769BP / MBEL55E) protein is Ribosome-binding factor A.